The following is a 259-amino-acid chain: Deoxyribose-phosphate aldolase (259 aa).

Asp-102 functions as the Proton donor/acceptor in the catalytic mechanism. Lys-166 serves as the catalytic Schiff-base intermediate with acetaldehyde. Residue Lys-200 is the Proton donor/acceptor of the active site.

Belongs to the DeoC/FbaB aldolase family. DeoC type 2 subfamily.

It localises to the cytoplasm. The catalysed reaction is 2-deoxy-D-ribose 5-phosphate = D-glyceraldehyde 3-phosphate + acetaldehyde. It participates in carbohydrate degradation; 2-deoxy-D-ribose 1-phosphate degradation; D-glyceraldehyde 3-phosphate and acetaldehyde from 2-deoxy-alpha-D-ribose 1-phosphate: step 2/2. Functionally, catalyzes a reversible aldol reaction between acetaldehyde and D-glyceraldehyde 3-phosphate to generate 2-deoxy-D-ribose 5-phosphate. In Vibrio cholerae serotype O1 (strain ATCC 39315 / El Tor Inaba N16961), this protein is Deoxyribose-phosphate aldolase.